Here is a 386-residue protein sequence, read N- to C-terminus: O-methyltransferase aunE (386 aa).

An S-adenosyl-L-methionine-binding site is contributed by W200. H299 functions as the Proton acceptor in the catalytic mechanism.

Belongs to the class I-like SAM-binding methyltransferase superfamily. Cation-independent O-methyltransferase family.

The protein operates within secondary metabolite biosynthesis. Its function is as follows. O-methyltransferase; part of the gene cluster that mediates the biosynthesis of aurasperone B, a dimeric gamma-naphthopyrone. The first step in the biosynthesis of aurasperone B is the production of gamma-naphthopyrone precursor YWA1 by the non-reducing polyketide synthase albA, via condensation of one acetyl-CoA starter unit with 6 malonyl-CoA units. YWA1 is then methylated by aunE at position C-6 to yield foncesin which is further methylated at position C-8 by aunD to produce fonsecin B. A key enzyme in the biosynthetic pathway is the cytochrome P450 monooxygenase aunB which catalyzes the oxidative dimerization of fonsecin B to aurasperone B. AunB also catalyzes the oxidative dimerization of rubrofusarin B into aurasperone A. This is O-methyltransferase aunE from Aspergillus niger (strain ATCC MYA-4892 / CBS 513.88 / FGSC A1513).